Reading from the N-terminus, the 921-residue chain is Protein translocase subunit SecA (921 aa).

ATP is bound by residues Gln-86, 104 to 108 (GEGKT), and Asp-512. Positions 905, 907, 916, and 917 each coordinate Zn(2+).

The protein belongs to the SecA family. Monomer and homodimer. Part of the essential Sec protein translocation apparatus which comprises SecA, SecYEG and auxiliary proteins SecDF-YajC and YidC. Zn(2+) serves as cofactor.

It is found in the cell inner membrane. The protein resides in the cytoplasm. It carries out the reaction ATP + H2O + cellular proteinSide 1 = ADP + phosphate + cellular proteinSide 2.. In terms of biological role, part of the Sec protein translocase complex. Interacts with the SecYEG preprotein conducting channel. Has a central role in coupling the hydrolysis of ATP to the transfer of proteins into and across the cell membrane, serving both as a receptor for the preprotein-SecB complex and as an ATP-driven molecular motor driving the stepwise translocation of polypeptide chains across the membrane. The sequence is that of Protein translocase subunit SecA from Caulobacter sp. (strain K31).